Reading from the N-terminus, the 343-residue chain is Uroporphyrinogen decarboxylase (343 aa).

Residues 23 to 27, F42, D73, Y150, S205, and H322 contribute to the substrate site; that span reads RQAGR.

Belongs to the uroporphyrinogen decarboxylase family. In terms of assembly, homodimer.

It is found in the cytoplasm. The enzyme catalyses uroporphyrinogen III + 4 H(+) = coproporphyrinogen III + 4 CO2. It functions in the pathway porphyrin-containing compound metabolism; protoporphyrin-IX biosynthesis; coproporphyrinogen-III from 5-aminolevulinate: step 4/4. Inhibited by N-ethyl-maleimide and phenylglyoxal. Its function is as follows. Catalyzes the decarboxylation of four acetate groups of uroporphyrinogen-III to yield coproporphyrinogen-III. The polypeptide is Uroporphyrinogen decarboxylase (hemE) (Cereibacter sphaeroides (strain ATCC 17023 / DSM 158 / JCM 6121 / CCUG 31486 / LMG 2827 / NBRC 12203 / NCIMB 8253 / ATH 2.4.1.) (Rhodobacter sphaeroides)).